A 100-amino-acid chain; its full sequence is UPF0473 protein LMHCC_1068 (100 aa).

Belongs to the UPF0473 family.

In Listeria monocytogenes serotype 4a (strain HCC23), this protein is UPF0473 protein LMHCC_1068.